The following is a 266-amino-acid chain: Orcokinin peptides type B (266 aa).

The signal sequence occupies residues M1–A20. 3 consecutive propeptides follow at residues G21–V46, D240–D246, and N264–E266.

Belongs to the orcokinin family.

Its subcellular location is the secreted. Myotropic peptides that enhance both the frequency and amplitude of spontaneous hindgut contractions. This chain is Orcokinin peptides type B, found in Procambarus clarkii (Red swamp crayfish).